We begin with the raw amino-acid sequence, 35 residues long: Photosystem II reaction center protein T (35 aa).

The chain crosses the membrane as a helical span at residues 3 to 23 (ALVYTFLLVGTLGIIFFAIFF).

The protein belongs to the PsbT family. In terms of assembly, PSII is composed of 1 copy each of membrane proteins PsbA, PsbB, PsbC, PsbD, PsbE, PsbF, PsbH, PsbI, PsbJ, PsbK, PsbL, PsbM, PsbT, PsbY, PsbZ, Psb30/Ycf12, at least 3 peripheral proteins of the oxygen-evolving complex and a large number of cofactors. It forms dimeric complexes.

It localises to the plastid. The protein localises to the chloroplast thylakoid membrane. Its function is as follows. Found at the monomer-monomer interface of the photosystem II (PS II) dimer, plays a role in assembly and dimerization of PSII. PSII is a light-driven water plastoquinone oxidoreductase, using light energy to abstract electrons from H(2)O, generating a proton gradient subsequently used for ATP formation. This Staurastrum punctulatum (Green alga) protein is Photosystem II reaction center protein T.